The chain runs to 309 residues: Manganese-dependent inorganic pyrophosphatase (309 aa).

6 residues coordinate Mn(2+): His9, Asp13, Asp15, Asp75, His97, and Asp149.

Homodimer. Mn(2+) serves as cofactor.

The protein localises to the cytoplasm. It carries out the reaction diphosphate + H2O = 2 phosphate + H(+). The chain is Manganese-dependent inorganic pyrophosphatase (ppaC) from Bacillus subtilis (strain 168).